A 393-amino-acid polypeptide reads, in one-letter code: Acetate kinase (393 aa).

Asn-10 lines the Mg(2+) pocket. Lys-17 lines the ATP pocket. Position 89 (Arg-89) interacts with substrate. Asp-146 functions as the Proton donor/acceptor in the catalytic mechanism. Residues 204 to 208, 278 to 280, and 323 to 327 contribute to the ATP site; these read HLGNG, DMR, and GVGEN. Glu-376 provides a ligand contact to Mg(2+).

It belongs to the acetokinase family. In terms of assembly, homodimer. Requires Mg(2+) as cofactor. Mn(2+) serves as cofactor.

The protein localises to the cytoplasm. The catalysed reaction is acetate + ATP = acetyl phosphate + ADP. Its pathway is metabolic intermediate biosynthesis; acetyl-CoA biosynthesis; acetyl-CoA from acetate: step 1/2. Its function is as follows. Catalyzes the formation of acetyl phosphate from acetate and ATP. Can also catalyze the reverse reaction. In Mycoplasma genitalium (strain ATCC 33530 / DSM 19775 / NCTC 10195 / G37) (Mycoplasmoides genitalium), this protein is Acetate kinase.